The sequence spans 63 residues: Beta-defensin 4 (63 aa).

A signal peptide spans 1-22 (MRLHHLLLAVLFLVLSAGSGFT). Position 23 is a pyrrolidone carboxylic acid (Q23). Intrachain disulfides connect C31–C60, C38–C53, and C43–C61.

It belongs to the beta-defensin family. Neutrophilic granules.

The protein localises to the secreted. Functionally, has bactericidal activity. Active against E.coli ML35 and S.aureus 502A. This chain is Beta-defensin 4 (DEFB4), found in Bos taurus (Bovine).